Reading from the N-terminus, the 538-residue chain is uncharacterized protein (538 aa).

The first 17 residues, 1–17, serve as a signal peptide directing secretion; that stretch reads MNLQILLLLLLFCHVAA. An N-linked (GlcNAc...) asparagine glycan is attached at N115.

This is an uncharacterized protein from Caenorhabditis elegans.